The primary structure comprises 577 residues: Arginine--tRNA ligase (577 aa).

A 'HIGH' region motif is present at residues 122–132 (PNVAKEMHVGH).

Belongs to the class-I aminoacyl-tRNA synthetase family. As to quaternary structure, monomer.

It localises to the cytoplasm. The enzyme catalyses tRNA(Arg) + L-arginine + ATP = L-arginyl-tRNA(Arg) + AMP + diphosphate. In Edwardsiella ictaluri (strain 93-146), this protein is Arginine--tRNA ligase.